The primary structure comprises 220 residues: Large ribosomal subunit protein bL9 (220 aa).

Over residues 167–184 (AAAEVEQAEDVAAAEQQD) the composition is skewed to low complexity. Positions 167–220 (AAAEVEQAEDVAAAEQQDSSPVDDHADDADGATGGEGRDEGAGDASDGEEMPST) are disordered.

This sequence belongs to the bacterial ribosomal protein bL9 family.

Its function is as follows. Binds to the 23S rRNA. The polypeptide is Large ribosomal subunit protein bL9 (Anaplasma marginale (strain St. Maries)).